The primary structure comprises 417 residues: Aminoacyltransferase FemB (417 aa).

This sequence belongs to the FemABX family.

The protein resides in the cytoplasm. The enzyme catalyses MurNAc-L-Ala-D-isoglutaminyl-L-Lys-(N(6)-tri-Gly)-D-Ala-D-Ala-diphospho-di-trans,octa-cis-undecaprenyl-GlcNAc + 2 glycyl-tRNA(Gly) = MurNAc-L-Ala-D-isoglutaminyl-L-Lys-(N(6)-penta-Gly)-D-Ala-D-Ala-diphospho-di-trans,octa-cis-undecaprenyl-GlcNAc + 2 tRNA(Gly) + 2 H(+). Catalyzes the incorporation of amino acid(s) into the interchain peptide bridge of peptidoglycan, using aminoacyl-tRNA as amino acid donor. This chain is Aminoacyltransferase FemB (femB), found in Staphylococcus epidermidis (strain ATCC 35984 / DSM 28319 / BCRC 17069 / CCUG 31568 / BM 3577 / RP62A).